The primary structure comprises 173 residues: 3-hydroxydecanoyl-[acyl-carrier-protein] dehydratase (173 aa).

H71 is an active-site residue.

It belongs to the thioester dehydratase family. FabA subfamily. As to quaternary structure, homodimer.

It localises to the cytoplasm. It carries out the reaction a (3R)-hydroxyacyl-[ACP] = a (2E)-enoyl-[ACP] + H2O. The catalysed reaction is (3R)-hydroxydecanoyl-[ACP] = (2E)-decenoyl-[ACP] + H2O. It catalyses the reaction (2E)-decenoyl-[ACP] = (3Z)-decenoyl-[ACP]. Its pathway is lipid metabolism; fatty acid biosynthesis. In terms of biological role, necessary for the introduction of cis unsaturation into fatty acids. Catalyzes the dehydration of (3R)-3-hydroxydecanoyl-ACP to E-(2)-decenoyl-ACP and then its isomerization to Z-(3)-decenoyl-ACP. Can catalyze the dehydratase reaction for beta-hydroxyacyl-ACPs with saturated chain lengths up to 16:0, being most active on intermediate chain length. In Bradyrhizobium sp. (strain ORS 278), this protein is 3-hydroxydecanoyl-[acyl-carrier-protein] dehydratase.